The chain runs to 118 residues: NLYQFGGMIQCANKGARSWLSYVNYGCYCGWGGSGTPVDELDRCCQIHDNCYGEAEKKRCGPKMTLYSWECANDVPVCNSKSACEGFVCDCDAAAAKCFAKAPYNKNNIGIGSKTRCQ.

7 disulfides stabilise this stretch: cysteine 11/cysteine 71, cysteine 27/cysteine 117, cysteine 29/cysteine 45, cysteine 44/cysteine 98, cysteine 51/cysteine 91, cysteine 60/cysteine 84, and cysteine 78/cysteine 89. Tyrosine 28, glycine 30, and glycine 32 together coordinate Ca(2+). Residue histidine 48 is part of the active site. Residue aspartate 49 participates in Ca(2+) binding. Residue aspartate 92 is part of the active site.

The cofactor is Ca(2+). In terms of tissue distribution, expressed by the venom gland.

It is found in the secreted. It catalyses the reaction a 1,2-diacyl-sn-glycero-3-phosphocholine + H2O = a 1-acyl-sn-glycero-3-phosphocholine + a fatty acid + H(+). Snake venom phospholipase A2 (PLA2) that potently inhibits ADP-(IC(50)=12 nM) and collagen-induced (IC(50)=4 nM) platelet aggregation when tested on human whole blood. PLA2 catalyzes the calcium-dependent hydrolysis of the 2-acyl groups in 3-sn-phosphoglycerides. The polypeptide is Basic phospholipase A2 acanthin-2 (Acanthophis antarcticus (Common death adder)).